A 193-amino-acid polypeptide reads, in one-letter code: dTTP/UTP pyrophosphatase (193 aa).

Asp75 acts as the Proton acceptor in catalysis.

The protein belongs to the Maf family. YhdE subfamily. It depends on a divalent metal cation as a cofactor.

It is found in the cytoplasm. The enzyme catalyses dTTP + H2O = dTMP + diphosphate + H(+). It carries out the reaction UTP + H2O = UMP + diphosphate + H(+). Nucleoside triphosphate pyrophosphatase that hydrolyzes dTTP and UTP. May have a dual role in cell division arrest and in preventing the incorporation of modified nucleotides into cellular nucleic acids. The chain is dTTP/UTP pyrophosphatase from Koribacter versatilis (strain Ellin345).